The primary structure comprises 267 residues: Mannose-specific lectin 1 (267 aa).

A signal peptide spans 1 to 24 (MAKSLVLSSLLLALLLAAPLASLA). Bulb-type lectin domains are found at residues 26–136 (NNVL…APNR) and 150–260 (RNVL…SPAR). Disulfide bonds link Cys54–Cys76 and Cys178–Cys203.

Heterotetramer of 2 domain 1 and 2 domain 2 chains arranged as a dimer of domain 1/domain 2 heterodimers.

Its function is as follows. Mannose-specific lectin. Has weak agglutinating activity towards trypsin-treated erythrocytes from rabbit but not from human. The polypeptide is Mannose-specific lectin 1 (Crocus vernus (Dutch crocus)).